The following is a 367-amino-acid chain: Protein-glutamate methylesterase/protein-glutamine glutaminase (367 aa).

A Response regulatory domain is found at 6–123 (RVLVVDDSAF…SLGIKQLADE (118 aa)). D57 carries the 4-aspartylphosphate modification. The region spanning 165 to 361 (ISKKEIVVVI…DILLKKVNEY (197 aa)) is the CheB-type methylesterase domain. Catalysis depends on residues S177, H204, and D303.

Belongs to the CheB family. Phosphorylated by CheA. Phosphorylation of the N-terminal regulatory domain activates the methylesterase activity.

Its subcellular location is the cytoplasm. It carries out the reaction [protein]-L-glutamate 5-O-methyl ester + H2O = L-glutamyl-[protein] + methanol + H(+). The catalysed reaction is L-glutaminyl-[protein] + H2O = L-glutamyl-[protein] + NH4(+). Functionally, involved in chemotaxis. Part of a chemotaxis signal transduction system that modulates chemotaxis in response to various stimuli. Catalyzes the demethylation of specific methylglutamate residues introduced into the chemoreceptors (methyl-accepting chemotaxis proteins or MCP) by CheR. Also mediates the irreversible deamidation of specific glutamine residues to glutamic acid. The chain is Protein-glutamate methylesterase/protein-glutamine glutaminase from Caldanaerobacter subterraneus subsp. tengcongensis (strain DSM 15242 / JCM 11007 / NBRC 100824 / MB4) (Thermoanaerobacter tengcongensis).